Reading from the N-terminus, the 765-residue chain is Amine oxidase [copper-containing] 3 (765 aa).

The Cytoplasmic segment spans residues 1-6 (MTQKTT). Residues 7-27 (LVLLALAVITIFALVCVLLAG) traverse the membrane as a helical; Signal-anchor for type II membrane protein segment. Topologically, residues 28–765 (RSGDGGGLSQ…SHGGFAYRDN (738 aa)) are extracellular. Residue asparagine 137 is glycosylated (N-linked (GlcNAc...) asparagine). A disulfide bond links cysteine 198 and cysteine 199. Asparagine 232 and asparagine 294 each carry an N-linked (GlcNAc...) asparagine glycan. Catalysis depends on aspartate 386, which acts as the Proton acceptor. Cysteine 404 and cysteine 430 form a disulfide bridge. The Schiff-base intermediate with substrate; via topaquinone role is filled by tyrosine 471. Tyrosine 471 is subject to 2',4',5'-topaquinone. Residues histidine 520 and histidine 522 each coordinate Cu(2+). Residues aspartate 529, leucine 530, aspartate 531, and glutamate 572 each contribute to the Ca(2+) site. Asparagine 592 is a glycosylation site (N-linked (GlcNAc...) asparagine). Glutamate 641 contributes to the Ca(2+) binding site. The N-linked (GlcNAc...) asparagine glycan is linked to asparagine 659. Residue phenylalanine 663 coordinates Ca(2+). The N-linked (GlcNAc...) asparagine glycan is linked to asparagine 666. Ca(2+) is bound by residues glutamate 667, aspartate 673, and leucine 674. A Cu(2+)-binding site is contributed by histidine 684. Residues cysteine 734 and cysteine 741 are joined by a disulfide bond.

It belongs to the copper/topaquinone oxidase family. In terms of assembly, homodimer; disulfide-linked. Probably forms heterodimers with AOC2. Cu(2+) is required as a cofactor. Requires Ca(2+) as cofactor. The cofactor is L-topaquinone. Topaquinone (TPQ) is generated by copper-dependent autoxidation of a specific tyrosyl residue. In terms of processing, N- and O-glycosylated.

The protein resides in the cell membrane. The enzyme catalyses methylamine + O2 + H2O = formaldehyde + H2O2 + NH4(+). It carries out the reaction benzylamine + O2 + H2O = benzaldehyde + H2O2 + NH4(+). It catalyses the reaction 2-phenylethylamine + O2 + H2O = 2-phenylacetaldehyde + H2O2 + NH4(+). Functionally, catalyzes the oxidative deamination of primary amines to the corresponding aldehydes with the concomitant production of hydrogen peroxide and ammonia. Has a preference for the primary monoamines methylamine and benzylamine. Could also act on 2-phenylethylamine but much less efficiently. At endothelial cells surface can also function as a cell adhesion protein that participates in lymphocyte extravasation and recirculation by mediating the binding of lymphocytes to peripheral lymph node vascular endothelial cells in an L-selectin-independent fashion. The chain is Amine oxidase [copper-containing] 3 from Mus musculus (Mouse).